A 188-amino-acid polypeptide reads, in one-letter code: MREYKIVVLGSGGVGKSALTVQFVQGIFVEKYDPTIEDSYRKQVEVDGQQCMLEILDTAGTEQFTAMRDLYMKNGQGFVLVYSITAQSTFNDLMDLRDQILRVKDTDEVPMILVGNKCDLEDERVVGKDQGQNLARQFGSAFLETSAKAKINVSEVFYDLVRQINRRYPESGRRQGQSNKQCCSCVIM.

Residue 10–17 (GSGGVGKS) coordinates GTP. The Effector region signature appears at 32–40 (YDPTIEDSY). GTP-binding positions include 57–61 (DTAGT) and 116–119 (NKCD).

The protein belongs to the small GTPase superfamily. Ras family.

The catalysed reaction is GTP + H2O = GDP + phosphate + H(+). Required in the hypodermis for proper formation of the cuticle. The protein is Ras-related protein Rap-1 (rap-1) of Caenorhabditis elegans.